The chain runs to 407 residues: Putative aspartate aminotransferase, cytoplasmic 2 (407 aa).

Residue K249 is modified to N6-(pyridoxal phosphate)lysine.

It belongs to the class-I pyridoxal-phosphate-dependent aminotransferase family. As to quaternary structure, homodimer. Requires pyridoxal 5'-phosphate as cofactor.

The protein localises to the cytoplasm. The catalysed reaction is L-aspartate + 2-oxoglutarate = oxaloacetate + L-glutamate. This chain is Putative aspartate aminotransferase, cytoplasmic 2 (GOT1L1), found in Bos taurus (Bovine).